The primary structure comprises 91 residues: Probable Fe(2+)-trafficking protein (91 aa).

It belongs to the Fe(2+)-trafficking protein family.

Functionally, could be a mediator in iron transactions between iron acquisition and iron-requiring processes, such as synthesis and/or repair of Fe-S clusters in biosynthetic enzymes. This chain is Probable Fe(2+)-trafficking protein, found in Cupriavidus metallidurans (strain ATCC 43123 / DSM 2839 / NBRC 102507 / CH34) (Ralstonia metallidurans).